Here is a 156-residue protein sequence, read N- to C-terminus: MLRQFIISRVGRRLQLPMITQSRLASDLDKTEYTTPGEIVDYDDPPHLPVPEYPVRPDEPLETRKQRLLYQSRKRGMLENDLLLSTFVAKHLKDFNAEQTAEYDQLINGVSNDWDIFYWATDTKPTPPQFDTEIMRLLKEHVKNHEKVQRIRQPDL.

The transit peptide at 1–24 directs the protein to the mitochondrion; sequence MLRQFIISRVGRRLQLPMITQSRL.

The protein belongs to the SDHAF2 family. As to quaternary structure, interacts with the flavoprotein subunit within the SDH catalytic dimer.

The protein localises to the mitochondrion matrix. Functionally, plays an essential role in the assembly of succinate dehydrogenase (SDH), an enzyme complex (also referred to as respiratory complex II) that is a component of both the tricarboxylic acid (TCA) cycle and the mitochondrial electron transport chain, and which couples the oxidation of succinate to fumarate with the reduction of ubiquinone (coenzyme Q) to ubiquinol. Required for flavinylation (covalent attachment of FAD) of the flavoprotein subunit of the SDH catalytic dimer. The sequence is that of Succinate dehydrogenase assembly factor 2-B, mitochondrial from Drosophila sechellia (Fruit fly).